The sequence spans 176 residues: Cytochrome b (176 aa).

Transmembrane regions (helical) follow at residues 33 to 53, 77 to 98, and 113 to 133; these read FGSLLGICLALQILTGIFLAM, WVLRYLHANGASMFFICLYLHV, and WNMGVILLFAVMATAFMGYVL. 2 residues coordinate heme b: histidine 83 and histidine 97.

Belongs to the cytochrome b family. The cytochrome bc1 complex contains 11 subunits: 3 respiratory subunits (MT-CYB, CYC1 and UQCRFS1), 2 core proteins (UQCRC1 and UQCRC2) and 6 low-molecular weight proteins (UQCRH/QCR6, UQCRB/QCR7, UQCRQ/QCR8, UQCR10/QCR9, UQCR11/QCR10 and a cleavage product of UQCRFS1). This cytochrome bc1 complex then forms a dimer. Heme b is required as a cofactor.

The protein resides in the mitochondrion inner membrane. In terms of biological role, component of the ubiquinol-cytochrome c reductase complex (complex III or cytochrome b-c1 complex) that is part of the mitochondrial respiratory chain. The b-c1 complex mediates electron transfer from ubiquinol to cytochrome c. Contributes to the generation of a proton gradient across the mitochondrial membrane that is then used for ATP synthesis. The protein is Cytochrome b (MT-CYB) of Lasionycteris noctivagans (Silver-haired bat).